Reading from the N-terminus, the 384-residue chain is Putative pectate lyase 2 (384 aa).

The signal sequence occupies residues 1 to 23 (MASLFLTIISLLFAAFSSSVVEA). Positions 182, 206, and 210 each coordinate Ca(2+). Arginine 262 is an active-site residue.

This sequence belongs to the polysaccharide lyase 1 family. Ca(2+) is required as a cofactor.

It carries out the reaction Eliminative cleavage of (1-&gt;4)-alpha-D-galacturonan to give oligosaccharides with 4-deoxy-alpha-D-galact-4-enuronosyl groups at their non-reducing ends.. Its pathway is glycan metabolism; pectin degradation; 2-dehydro-3-deoxy-D-gluconate from pectin: step 2/5. The protein is Putative pectate lyase 2 of Arabidopsis thaliana (Mouse-ear cress).